The primary structure comprises 375 residues: Probable UDP-N-acetylglucosamine 2-epimerase (375 aa).

Belongs to the UDP-N-acetylglucosamine 2-epimerase family.

Its subcellular location is the cytoplasm. It catalyses the reaction UDP-N-acetyl-alpha-D-glucosamine = UDP-N-acetyl-alpha-D-mannosamine. It functions in the pathway glycan metabolism; exopolysaccharide EPS I biosynthesis. May be involved in synthesis of N-acetyltrideoxygalactose, a component of exopolysaccharide EPS I which functions as a virulence factor. This Ralstonia solanacearum (Pseudomonas solanacearum) protein is Probable UDP-N-acetylglucosamine 2-epimerase (epsC).